Consider the following 156-residue polypeptide: Small ribosomal subunit protein uS7 (156 aa).

Belongs to the universal ribosomal protein uS7 family. As to quaternary structure, part of the 30S ribosomal subunit. Contacts proteins S9 and S11.

Functionally, one of the primary rRNA binding proteins, it binds directly to 16S rRNA where it nucleates assembly of the head domain of the 30S subunit. Is located at the subunit interface close to the decoding center, probably blocks exit of the E-site tRNA. The chain is Small ribosomal subunit protein uS7 from Haemophilus influenzae (strain 86-028NP).